A 1210-amino-acid chain; its full sequence is Homeodomain-interacting protein kinase 1 (1210 aa).

Lysine 25 is covalently cross-linked (Glycyl lysine isopeptide (Lys-Gly) (interchain with G-Cter in SUMO); alternate). Lysine 25 participates in a covalent cross-link: Glycyl lysine isopeptide (Lys-Gly) (interchain with G-Cter in SUMO2); alternate. Residues lysine 120 and lysine 124 each participate in a glycyl lysine isopeptide (Lys-Gly) (interchain with G-Cter in SUMO2) cross-link. Residues 190 to 518 enclose the Protein kinase domain; that stretch reads YEVLEFLGRG…PLKTLNHQFV (329 aa). ATP-binding positions include 196–204 and lysine 219; that span reads LGRGTFGQV. Aspartate 315 (proton acceptor) is an active-site residue. A disordered region spans residues 835–856; the sequence is QQQSSSLPSKKNKQSAPVSSKS. The Nuclear localization signal 1 (NLS1) signature appears at 844 to 847; it reads KKNK. Serine 872 is modified (phosphoserine). Residues 885–1093 form an interaction with TP53 region; that stretch reads PVQDQHQPII…FQHGSPLHST (209 aa). The segment at 891–998 is required for localization to nuclear speckles; it reads QPIIIPDTPS…PLKTQLGDCT (108 aa). Residues 902–926 form an SUMO interaction motifs (SIM); required for nuclear localization and kinase activity region; it reads PVSVITIRSDTDEEEDNKYKPNSSS. A disordered region spans residues 938 to 981; it reads TVNDSPDSDSSLSSPHPTDTLSALRGNSGTLLEGPGRPAADGIG. Residues 941–959 show a composition bias toward low complexity; that stretch reads DSPDSDSSLSSPHPTDTLS. A Glycyl lysine isopeptide (Lys-Gly) (interchain with G-Cter in SUMO2) cross-link involves residue lysine 991. Disordered regions lie at residues 1046–1069 and 1084–1104; these read LSQN…APRR and FQHG…APAH. Composition is skewed to low complexity over residues 1047-1063 and 1095-1104; these read SQNQ…ERSS and HPHLAPAPAH. Serine 1200 is modified (phosphoserine). Lysine 1203 is covalently cross-linked (Glycyl lysine isopeptide (Lys-Gly) (interchain with G-Cter in SUMO)).

The protein belongs to the protein kinase superfamily. CMGC Ser/Thr protein kinase family. HIPK subfamily. As to quaternary structure, interacts with Nkx1-2, Nkx2-5, MYB, PARK7, DAXX and p53/TP53. Part of a cytoplasmic complex made of HIPK1, DAB2IP and MAP3K5 in response to TNF. This complex formation promotes MAP3K5-JNK activation and subsequent apoptosis. Phosphorylated and activated by JNK1. Autophosphorylated. In terms of processing, sumoylated. When conjugated it is directed to nuclear speckles. SENP1-mediated desumoylation is mediated by TNF in response to stress stimuli, triggering transient translocation from nucleus to cytoplasm. As to expression, ubiquitously expressed, with high levels in reproductive tissues. Expressed in the epithelial layer of mammary gland, uterus and epididymis, in the corpus luteum, and in post-meiotic round spermatids.

Its subcellular location is the nucleus. It is found in the cytoplasm. It localises to the nucleus speckle. The catalysed reaction is L-seryl-[protein] + ATP = O-phospho-L-seryl-[protein] + ADP + H(+). It catalyses the reaction L-threonyl-[protein] + ATP = O-phospho-L-threonyl-[protein] + ADP + H(+). Serine/threonine-protein kinase involved in transcription regulation and TNF-mediated cellular apoptosis. Plays a role as a corepressor for homeodomain transcription factors. Phosphorylates DAXX and MYB. Phosphorylates DAXX in response to stress, and mediates its translocation from the nucleus to the cytoplasm. Inactivates MYB transcription factor activity by phosphorylation. Prevents MAP3K5-JNK activation in the absence of TNF. TNF triggers its translocation to the cytoplasm in response to stress stimuli, thus activating nuclear MAP3K5-JNK by derepression and promoting apoptosis. May be involved in anti-oxidative stress responses. Involved in the regulation of eye size, lens formation and retinal lamination during late embryogenesis. Promotes angiogenesis and to be involved in erythroid differentiation. May be involved in malignant squamous cell tumor formation. Phosphorylates PAGE4 at 'Thr-51' which is critical for the ability of PAGE4 to potentiate the transcriptional activator activity of JUN. The chain is Homeodomain-interacting protein kinase 1 (Hipk1) from Mus musculus (Mouse).